Consider the following 270-residue polypeptide: Short chain dehydrogenase/reductase dpfgG (270 aa).

Residues Ile-18, Asp-69, Asn-96, Lys-130, Lys-171, Ile-200, and Asn-204 each coordinate NADP(+). Catalysis depends on Lys-171, which acts as the Lowers pKa of active site Tyr.

Belongs to the short-chain dehydrogenases/reductases (SDR) family.

It participates in secondary metabolite biosynthesis; terpenoid biosynthesis. In terms of biological role, short chain dehydrogenase/reductase; part of the gene cluster that mediates the biosynthesis of diterpenoid pyrones. The first step of the pathway is the synthesis of the alpha-pyrone moiety by the polyketide synthase dpfgA via condensation of one acetyl-CoA starter unit with 3 malonyl-CoA units and 2 methylations. The alpha-pyrone is then combined with geranylgeranyl pyrophosphate (GGPP) formed by the GGPP synthase dpfgD through the action of the prenyltransferase dpfgC to yield a linear alpha-pyrone diterpenoid. Subsequent steps in the diterpenoid pyrone biosynthetic pathway involve the decalin core formation, which is initiated by the epoxidation of the C10-C11 olefin by the FAD-dependent oxidoreductase dpfgE, and is followed by a cyclization cascade catalyzed by the terpene cyclase dpfgB. The short chain dehydrogenase/reductase dpfgG then oxidizes the 8S hydroxy group to a ketone and the short chain dehydrogenase/reductase dpfgH reduces the ketone to the 8R hydroxy group to yield higginsianin B. Higginsianin B is further methylated by the methyltransferase dpfgI to produce the intermediate named FDDP B. The cytochrome P450 monooxygenase dfgpJ then catalyzes a three-step oxidation at C-27 to generate a carboxylic acid as well as C-26 hydroxylation. Finally, methyltransferase dpfgK methylates the carboxylic acid generated by dpfgJ, yielding the final diterpenoid pyrones from the pathway which were named FDDP D and FDDP E. This chain is Short chain dehydrogenase/reductase dpfgG, found in Gibberella zeae (strain ATCC MYA-4620 / CBS 123657 / FGSC 9075 / NRRL 31084 / PH-1) (Wheat head blight fungus).